The primary structure comprises 220 residues: Outer membrane protein assembly factor BamD (220 aa).

A signal peptide spans 1 to 22 (MRLKHFKTFLFITMAIIVIGTG). A lipid anchor (N-palmitoyl cysteine) is attached at cysteine 23. Cysteine 23 is lipidated: S-diacylglycerol cysteine.

It belongs to the BamD family. Part of the Bam complex.

The protein resides in the cell outer membrane. In terms of biological role, part of the outer membrane protein assembly complex, which is involved in assembly and insertion of beta-barrel proteins into the outer membrane. The sequence is that of Outer membrane protein assembly factor BamD from Helicobacter pylori (strain ATCC 700392 / 26695) (Campylobacter pylori).